The primary structure comprises 91 residues: Small ribosomal subunit protein uS19 (91 aa).

The protein belongs to the universal ribosomal protein uS19 family.

In terms of biological role, protein S19 forms a complex with S13 that binds strongly to the 16S ribosomal RNA. This chain is Small ribosomal subunit protein uS19, found in Janthinobacterium sp. (strain Marseille) (Minibacterium massiliensis).